The sequence spans 72 residues: Translation initiation factor IF-1 (72 aa).

In terms of domain architecture, S1-like spans 1–72; sequence MAKDDVIEVE…TRGRITYRFK (72 aa).

Belongs to the IF-1 family. Component of the 30S ribosomal translation pre-initiation complex which assembles on the 30S ribosome in the order IF-2 and IF-3, IF-1 and N-formylmethionyl-tRNA(fMet); mRNA recruitment can occur at any time during PIC assembly.

The protein localises to the cytoplasm. One of the essential components for the initiation of protein synthesis. Stabilizes the binding of IF-2 and IF-3 on the 30S subunit to which N-formylmethionyl-tRNA(fMet) subsequently binds. Helps modulate mRNA selection, yielding the 30S pre-initiation complex (PIC). Upon addition of the 50S ribosomal subunit IF-1, IF-2 and IF-3 are released leaving the mature 70S translation initiation complex. The chain is Translation initiation factor IF-1 from Streptococcus gordonii (strain Challis / ATCC 35105 / BCRC 15272 / CH1 / DL1 / V288).